Consider the following 376-residue polypeptide: Pyrimidine monooxygenase RutA (376 aa).

FMN-binding positions include Ile-61 to Lys-62, Asn-127, Glu-136, Arg-152 to Tyr-153, and Ser-202.

It belongs to the NtaA/SnaA/DszA monooxygenase family. RutA subfamily.

It catalyses the reaction uracil + FMNH2 + NADH + O2 = (Z)-3-ureidoacrylate + FMN + NAD(+) + H2O + H(+). The enzyme catalyses thymine + FMNH2 + NADH + O2 = (Z)-2-methylureidoacrylate + FMN + NAD(+) + H2O + H(+). Catalyzes the pyrimidine ring opening between N-3 and C-4 by an unusual flavin hydroperoxide-catalyzed mechanism, adding oxygen atoms in the process to yield ureidoacrylate peracid, that immediately reacts with FMN forming ureidoacrylate and FMN-N(5)-oxide. The FMN-N(5)-oxide reacts spontaneously with NADH to produce FMN. Requires the flavin reductase RutF to regenerate FMN in vivo. This chain is Pyrimidine monooxygenase RutA, found in Methylorubrum populi (strain ATCC BAA-705 / NCIMB 13946 / BJ001) (Methylobacterium populi).